A 180-amino-acid polypeptide reads, in one-letter code: Ribulose bisphosphate carboxylase small subunit, chloroplastic 3 (180 aa).

The transit peptide at 1-56 directs the protein to the chloroplast; it reads MASSLMSNAITAVVGASGAQANMVAPFNGLKSIASFPVTRKSNDITSIASNGGRVQ.

It belongs to the RuBisCO small chain family. Heterohexadecamer of 8 large and 8 small subunits.

It localises to the plastid. The protein localises to the chloroplast. Its function is as follows. RuBisCO catalyzes two reactions: the carboxylation of D-ribulose 1,5-bisphosphate, the primary event in carbon dioxide fixation, as well as the oxidative fragmentation of the pentose substrate. Both reactions occur simultaneously and in competition at the same active site. Although the small subunit is not catalytic it is essential for maximal activity. This chain is Ribulose bisphosphate carboxylase small subunit, chloroplastic 3, found in Amaranthus hypochondriacus (Prince-of-Wales feather).